Consider the following 161-residue polypeptide: Nucleotide-binding protein Shewmr4_3156 (161 aa).

The protein belongs to the YajQ family.

In terms of biological role, nucleotide-binding protein. The polypeptide is Nucleotide-binding protein Shewmr4_3156 (Shewanella sp. (strain MR-4)).